A 62-amino-acid polypeptide reads, in one-letter code: U10-hottentoxin-Hj3a (62 aa).

An N-terminal signal peptide occupies residues 1-22 (MQKLLIILILFCILKFNVDVEG). Intrachain disulfides connect C28-C46, C33-C59, and C37-C61.

This sequence belongs to the short scorpion toxin superfamily. Potassium channel inhibitor family. Alpha-KTx 23 subfamily. Expressed by the venom gland.

It localises to the secreted. Functionally, may block potassium channels. In Hottentotta judaicus (Black scorpion), this protein is U10-hottentoxin-Hj3a.